The following is a 268-amino-acid chain: Aliphatic sulfonates import ATP-binding protein SsuB 2 (268 aa).

Positions 15–236 (LAVRKLQKTF…VRGSHRLAAL (222 aa)) constitute an ABC transporter domain. 47–54 (GRSGCGKS) lines the ATP pocket.

Belongs to the ABC transporter superfamily. Aliphatic sulfonates importer (TC 3.A.1.17.2) family. As to quaternary structure, the complex is composed of two ATP-binding proteins (SsuB), two transmembrane proteins (SsuC) and a solute-binding protein (SsuA).

Its subcellular location is the cell inner membrane. The enzyme catalyses ATP + H2O + aliphatic sulfonate-[sulfonate-binding protein]Side 1 = ADP + phosphate + aliphatic sulfonateSide 2 + [sulfonate-binding protein]Side 1.. Its function is as follows. Part of the ABC transporter complex SsuABC involved in aliphatic sulfonates import. Responsible for energy coupling to the transport system. The protein is Aliphatic sulfonates import ATP-binding protein SsuB 2 of Pseudomonas fluorescens (strain ATCC BAA-477 / NRRL B-23932 / Pf-5).